The primary structure comprises 993 residues: Mediator of RNA polymerase II transcription subunit 24 (993 aa).

S827 and S829 each carry phosphoserine.

The protein belongs to the Mediator complex subunit 24 family. As to quaternary structure, component of the Mediator complex, which includes at least CDK8, MED4, MED6, MED11, MED14, MED17, MED18, MED20, MED21, MED22, MED27, MED28, MED30 and MED31.

Its subcellular location is the nucleus. In terms of biological role, component of the Mediator complex, a coactivator involved in the regulated transcription of nearly all RNA polymerase II-dependent genes. Mediator functions as a bridge to convey information from gene-specific regulatory proteins to the basal RNA polymerase II transcription machinery. Mediator is recruited to promoters by direct interactions with regulatory proteins and serves as a scaffold for the assembly of a functional preinitiation complex with RNA polymerase II and the general transcription factors. Required for activated transcription of the MtnA, MtnB and MtnD genes. In Drosophila melanogaster (Fruit fly), this protein is Mediator of RNA polymerase II transcription subunit 24 (MED24).